The primary structure comprises 278 residues: Keratin-associated protein 5-1 (278 aa).

Tandem repeats lie at residues 42-45 (CCVP), 48-51 (CCKP), 130-133 (CCVP), 136-139 (CCKP), 142-145 (CCVP), 239-242 (CCKP), 258-261 (CCKP), and 268-271 (CCVP). Residues 42 to 271 (CCVPVCCCKP…CCSQSSCCVP (230 aa)) form an 8 X 4 AA repeats of C-C-X-P region.

This sequence belongs to the KRTAP type 5 family. As to quaternary structure, interacts with hair keratins. Expressed in hair root but not in skin. Expressed also in lung, pancreas, ovary, testis.

Its function is as follows. In the hair cortex, hair keratin intermediate filaments are embedded in an interfilamentous matrix, consisting of hair keratin-associated protein (KRTAP), which are essential for the formation of a rigid and resistant hair shaft through their extensive disulfide bond cross-linking with abundant cysteine residues of hair keratins. The matrix proteins include the high-sulfur and high-glycine-tyrosine keratins. In Homo sapiens (Human), this protein is Keratin-associated protein 5-1 (KRTAP5-1).